Reading from the N-terminus, the 385-residue chain is MKNLTILGSTGSIGVSTLDVVKAYPDMFRVVALTAGNNLELLKTQIETFSPDLVSVLTAEKAQALSRSLTGKKPEIMHGVEGMIAAATASETTMVVAAIVGAAGLVPTTAAIMAGKDVALANKETLVTAGHLVMQMVREKKVNLYPVDSEHCAVFQSMAGHRSQDIARVILTASGGPFLNWGREKLQAATVADALNHPNWSMGRKITVDSATMMNKGLEVIEARWLFDIPVQRIGVNIHPQSIIHSMVEYVDGSVMAQLGTPDMKGPIAYALTYPGRVPSGVKALDLTALSGLTFFKPDTDRFPALQLAYRAADAGESMPAVMNAANEIAVEAFLGGRIGFMAIAEAIEKVMDLHEPHALASIEEVLEADRWGRRTAKEVLGVGC.

Residues Thr-10, Gly-11, Ser-12, Ile-13, Gly-36, Asn-38, and Asn-122 each contribute to the NADPH site. 1-deoxy-D-xylulose 5-phosphate is bound at residue Lys-123. NADPH is bound at residue Glu-124. Residue Asp-148 participates in Mn(2+) binding. The 1-deoxy-D-xylulose 5-phosphate site is built by Ser-149, Glu-150, Ser-174, and His-197. Residue Glu-150 participates in Mn(2+) binding. Gly-203 provides a ligand contact to NADPH. 4 residues coordinate 1-deoxy-D-xylulose 5-phosphate: Ser-210, Asn-215, Lys-216, and Glu-219. Glu-219 lines the Mn(2+) pocket.

The protein belongs to the DXR family. Mg(2+) is required as a cofactor. The cofactor is Mn(2+).

It carries out the reaction 2-C-methyl-D-erythritol 4-phosphate + NADP(+) = 1-deoxy-D-xylulose 5-phosphate + NADPH + H(+). It participates in isoprenoid biosynthesis; isopentenyl diphosphate biosynthesis via DXP pathway; isopentenyl diphosphate from 1-deoxy-D-xylulose 5-phosphate: step 1/6. In terms of biological role, catalyzes the NADPH-dependent rearrangement and reduction of 1-deoxy-D-xylulose-5-phosphate (DXP) to 2-C-methyl-D-erythritol 4-phosphate (MEP). The polypeptide is 1-deoxy-D-xylulose 5-phosphate reductoisomerase (Citrifermentans bemidjiense (strain ATCC BAA-1014 / DSM 16622 / JCM 12645 / Bem) (Geobacter bemidjiensis)).